Reading from the N-terminus, the 238-residue chain is Ubiquinone biosynthesis O-methyltransferase (238 aa).

Residues arginine 40, glycine 59, aspartate 80, and methionine 124 each contribute to the S-adenosyl-L-methionine site.

It belongs to the methyltransferase superfamily. UbiG/COQ3 family.

It carries out the reaction a 3-demethylubiquinol + S-adenosyl-L-methionine = a ubiquinol + S-adenosyl-L-homocysteine + H(+). The enzyme catalyses a 3-(all-trans-polyprenyl)benzene-1,2-diol + S-adenosyl-L-methionine = a 2-methoxy-6-(all-trans-polyprenyl)phenol + S-adenosyl-L-homocysteine + H(+). The protein operates within cofactor biosynthesis; ubiquinone biosynthesis. Functionally, O-methyltransferase that catalyzes the 2 O-methylation steps in the ubiquinone biosynthetic pathway. The sequence is that of Ubiquinone biosynthesis O-methyltransferase from Ralstonia nicotianae (strain ATCC BAA-1114 / GMI1000) (Ralstonia solanacearum).